A 435-amino-acid polypeptide reads, in one-letter code: Gamma-glutamyl phosphate reductase (435 aa).

It belongs to the gamma-glutamyl phosphate reductase family.

It is found in the cytoplasm. It carries out the reaction L-glutamate 5-semialdehyde + phosphate + NADP(+) = L-glutamyl 5-phosphate + NADPH + H(+). The protein operates within amino-acid biosynthesis; L-proline biosynthesis; L-glutamate 5-semialdehyde from L-glutamate: step 2/2. Its function is as follows. Catalyzes the NADPH-dependent reduction of L-glutamate 5-phosphate into L-glutamate 5-semialdehyde and phosphate. The product spontaneously undergoes cyclization to form 1-pyrroline-5-carboxylate. This is Gamma-glutamyl phosphate reductase from Nostoc punctiforme (strain ATCC 29133 / PCC 73102).